Consider the following 461-residue polypeptide: Photosystem II CP43 reaction center protein (461 aa).

A propeptide spanning residues 1-2 (ME) is cleaved from the precursor. Thr-3 bears the N-acetylthreonine mark. Thr-3 carries the post-translational modification Phosphothreonine. Helical transmembrane passes span 57–81 (LFEVAHFVPEKPMYEQGLILLPHLA), 122–143 (LIGPETLEESFPFFGYVWKDKS), 166–188 (KSVYFGGVYDTWAPGGGDVRKIT), 243–263 (KPFAWARRAFVWSGEAYLSYS), and 279–300 (WFNNTAYPSEFYGPTGPEASQA). Residue Glu-355 coordinates [CaMn4O5] cluster. The helical transmembrane segment at 435–459 (RARAAAAGFEKGIDRDTEPVLSMTP) threads the bilayer.

It belongs to the PsbB/PsbC family. PsbC subfamily. PSII is composed of 1 copy each of membrane proteins PsbA, PsbB, PsbC, PsbD, PsbE, PsbF, PsbH, PsbI, PsbJ, PsbK, PsbL, PsbM, PsbT, PsbX, PsbY, PsbZ, Psb30/Ycf12, at least 3 peripheral proteins of the oxygen-evolving complex and a large number of cofactors. It forms dimeric complexes. Requires Binds multiple chlorophylls and provides some of the ligands for the Ca-4Mn-5O cluster of the oxygen-evolving complex. It may also provide a ligand for a Cl- that is required for oxygen evolution. PSII binds additional chlorophylls, carotenoids and specific lipids. as cofactor.

The protein localises to the plastid. The protein resides in the chloroplast thylakoid membrane. In terms of biological role, one of the components of the core complex of photosystem II (PSII). It binds chlorophyll and helps catalyze the primary light-induced photochemical processes of PSII. PSII is a light-driven water:plastoquinone oxidoreductase, using light energy to abstract electrons from H(2)O, generating O(2) and a proton gradient subsequently used for ATP formation. This Psilotum nudum (Whisk fern) protein is Photosystem II CP43 reaction center protein.